A 70-amino-acid polypeptide reads, in one-letter code: Homeobox protein CDX (70 aa).

The segment at residues 1 to 60 is a DNA-binding region (homeobox); sequence PDKYRVVYTDYQRLELEKEFHYSRYITMNRKAELAKSLDLTERQIKIWFQNRRAKERKIN.

This sequence belongs to the Caudal homeobox family.

It is found in the nucleus. In Lineus sanguineus (Ribbon worm), this protein is Homeobox protein CDX (CDX).